The sequence spans 561 residues: Carboxylesterase 1E (561 aa).

Residues 1–18 form the signal peptide; that stretch reads MCLYALILVFLAAFTAGG. N-linked (GlcNAc...) asparagine glycans are attached at residues asparagine 79 and asparagine 107. Residues cysteine 87 and cysteine 116 are joined by a disulfide bond. Serine 221 serves as the catalytic Acyl-ester intermediate. The cysteines at positions 273 and 284 are disulfide-linked. Residues glutamate 353 and histidine 466 each act as charge relay system in the active site. Asparagine 489 carries N-linked (GlcNAc...) asparagine glycosylation. The short motif at 558-561 is the Prevents secretion from ER element; the sequence is HTEL.

The protein belongs to the type-B carboxylesterase/lipase family. As to expression, expressed in liver.

Its subcellular location is the endoplasmic reticulum lumen. The protein resides in the microsome membrane. It catalyses the reaction a carboxylic ester + H2O = an alcohol + a carboxylate + H(+). The enzyme catalyses all-trans-retinyl hexadecanoate + H2O = all-trans-retinol + hexadecanoate + H(+). In terms of biological role, involved in the detoxification of xenobiotics and in the activation of ester and amide prodrugs. Hydrolyzes retinyl esters. This Rattus norvegicus (Rat) protein is Carboxylesterase 1E (Ces1e).